The chain runs to 390 residues: Isotocin receptor (390 aa).

At 1-48 (MEEMFKEQDFWSFNESSRNSTVGNETFGGNQTVNPLKRNEEVAKVEVT) the chain is on the extracellular side. 4 N-linked (GlcNAc...) asparagine glycosylation sites follow: Asn-14, Asn-19, Asn-24, and Asn-30. A helical transmembrane segment spans residues 49–69 (VLALVLFLALAGNLCVLIAIY). The Cytoplasmic portion of the chain corresponds to 70–86 (TAKHTQSRMYYLMKHLS). The chain crosses the membrane as a helical span at residues 87–107 (IADLVVAVFQVLPQLIWDITF). Topologically, residues 108–124 (RFYGPDFLCRLVKYLQT) are extracellular. Cys-116 and Cys-191 form a disulfide bridge. A helical membrane pass occupies residues 125–145 (VGMFASTYMLVLMSIDRCIAI). At 146–160 (CQPLRSLHKRKDRCY) the chain is on the cytoplasmic side. Residues 161–181 (VIVSWALSLVFSVPQVYIFSL) form a helical membrane-spanning segment. Topologically, residues 182–206 (REIGNGVYDCWGDFVQPWGAKAYIT) are extracellular. Residues 207 to 227 (WISLTIYIIPVAILGGCYGLI) traverse the membrane as a helical segment. The Cytoplasmic segment spans residues 228–276 (SFKIWQNFKRKTKKDQCITLTTAASKANALARVSSVKLVSKAKITTVKM). The chain crosses the membrane as a helical span at residues 277 to 297 (TFVIVLAYIVCWTPFFFVQMW). Over 298-311 (SAWDPEAPREAMPF) the chain is Extracellular. Residues 312-332 (IISMLLASLNSCCNPWIYMFF) form a helical membrane-spanning segment. Residues 333–390 (AGHLFHDLKQSLLCCSTLYLKSSQCRCDQEHDSRKSNCSTYVIKSTSSQRSITQSSIT) are Cytoplasmic-facing.

The protein belongs to the G-protein coupled receptor 1 family. Vasopressin/oxytocin receptor subfamily. As to expression, expressed in brain, intestine, bladder, skeletal muscle, lateral line, gills and kidney.

The protein localises to the cell membrane. Functionally, binds to isotocin. Can also be activated by vasotocin, mesotocin, oxytocin and Arg-vasopressin, although these have lower potencies than isotocin. Produces an induction of membrane chloride currents indicating that it is coupled to the inositol phosphate/calcium pathway. This Catostomus commersonii (White sucker) protein is Isotocin receptor.